The primary structure comprises 347 residues: Rhodopsin (347 aa).

The Extracellular segment spans residues 1-33 (TEGPDFYIPMVNTTGVVRSPYEYPQYYLVNPAA). Asn12 carries an N-linked (GlcNAc...) asparagine glycan. Residues 34 to 58 (YAVLGAYMFFLIIVGFPINFLTLYV) traverse the membrane as a helical segment. Residues 59–70 (TLEHKKLRTPLN) are Cytoplasmic-facing. Residues 71–93 (YILLNLAVADLFMVIGGFTTTMY) form a helical membrane-spanning segment. Residues 94 to 107 (SSMHGYFVLGRLGC) are Extracellular-facing. Residues Cys107 and Cys184 are joined by a disulfide bond. The chain crosses the membrane as a helical span at residues 108–130 (NIEGFFATLGGMISLWSLAVLAI). The 'Ionic lock' involved in activated form stabilization motif lies at 131-133 (ERW). The Cytoplasmic segment spans residues 131–149 (ERWVVVCKPISNFRFGENH). Residues 150 to 170 (AIMGVSLTWVMALACTVPPLV) form a helical membrane-spanning segment. Over 171-199 (GWSRYIPEGMQCACGIDYYTRAEGYNNES) the chain is Extracellular. A glycan (N-linked (GlcNAc...) asparagine) is linked at Asn197. A helical transmembrane segment spans residues 200-221 (FVIYMFTFHFLFPMFIIFFCYG). Over 222-249 (RLLCAVKEAAAAQQESETTQRAEREVTR) the chain is Cytoplasmic. Residues 250–271 (MVILMVIGYLVCWLPYASVAWF) traverse the membrane as a helical segment. Residues 272 to 283 (IFTHKGSEFGPL) lie on the Extracellular side of the membrane. Residues 284–305 (FMAVPSFFAKSSSIYNPIIYIC) form a helical membrane-spanning segment. Lys293 carries the post-translational modification N6-(retinylidene)lysine. Residues 306-347 (MNKQFRQCMITTLFCGKNPFEGQEEDSSTKTEASSASSVSPA) are Cytoplasmic-facing. A lipid anchor (S-palmitoyl cysteine) is attached at Cys320. The segment at 326 to 347 (EGQEEDSSTKTEASSASSVSPA) is disordered. Over residues 335–347 (KTEASSASSVSPA) the composition is skewed to low complexity.

The protein belongs to the G-protein coupled receptor 1 family. Opsin subfamily. Phosphorylated on some or all of the serine and threonine residues present in the C-terminal region. In terms of processing, contains one covalently linked retinal chromophore.

Its subcellular location is the membrane. It is found in the cell projection. The protein resides in the cilium. The protein localises to the photoreceptor outer segment. Functionally, photoreceptor required for image-forming vision at low light intensity. While most salt water fish species use retinal as chromophore, most freshwater fish use 3-dehydroretinal, or a mixture of retinal and 3-dehydroretinal. Light-induced isomerization of 11-cis to all-trans retinal triggers a conformational change that activates signaling via G-proteins. Subsequent receptor phosphorylation mediates displacement of the bound G-protein alpha subunit by arrestin and terminates signaling. The sequence is that of Rhodopsin (rho) from Sargocentron spiniferum (Sabre squirrelfish).